Here is a 475-residue protein sequence, read N- to C-terminus: Bystin (475 aa).

Basic residues-rich tracts occupy residues 1–12 (MGKDVKKVHKLR) and 29–41 (KPHKRVGKLRKKK). Disordered stretches follow at residues 1-57 (MGKD…ESVI) and 106-149 (DFID…QFGV). Acidic residues-rich tracts occupy residues 45–54 (ENDTGIDETE) and 107–119 (FIDDDDDDEDADQ).

It belongs to the bystin family.

The protein localises to the nucleus. It localises to the nucleolus. Its function is as follows. Required for processing of 20S pre-rRNA precursor and biogenesis of 40S ribosomal subunits. The protein is Bystin (bysl) of Dictyostelium discoideum (Social amoeba).